Reading from the N-terminus, the 461-residue chain is GTPase Der (461 aa).

2 consecutive EngA-type G domains span residues 9-171 (KTIA…NLNK) and 200-371 (IQVG…ECFS). Residues 15-22 (GQPNVGKS), 62-66 (DTGGM), 123-126 (NKID), 206-213 (GRVNVGKS), 253-257 (DTAGI), and 317-320 (NKWD) contribute to the GTP site. Residues 372 to 456 (KRIPTSLLNS…PLILNAKDKK (85 aa)) enclose the KH-like domain.

Belongs to the TRAFAC class TrmE-Era-EngA-EngB-Septin-like GTPase superfamily. EngA (Der) GTPase family. Associates with the 50S ribosomal subunit.

Its function is as follows. GTPase that plays an essential role in the late steps of ribosome biogenesis. This is GTPase Der from Helicobacter pylori (strain HPAG1).